The following is a 161-amino-acid chain: Cyclic pyranopterin monophosphate synthase (161 aa).

Substrate is bound by residues 75–77 (LCH) and 113–114 (ME). D128 is a catalytic residue.

The protein belongs to the MoaC family. In terms of assembly, homohexamer; trimer of dimers.

The catalysed reaction is (8S)-3',8-cyclo-7,8-dihydroguanosine 5'-triphosphate = cyclic pyranopterin phosphate + diphosphate. It functions in the pathway cofactor biosynthesis; molybdopterin biosynthesis. Functionally, catalyzes the conversion of (8S)-3',8-cyclo-7,8-dihydroguanosine 5'-triphosphate to cyclic pyranopterin monophosphate (cPMP). This is Cyclic pyranopterin monophosphate synthase from Escherichia coli O139:H28 (strain E24377A / ETEC).